A 378-amino-acid chain; its full sequence is MIQYVYLKHMRKLWSLGKVRSTVLRFSTTNRNASHLIKNELEQISPGIRQMLNSNSEFLEECSKYYTIAQGKQMRPSLVLLMSKATSLCHGIDRSVVGDKYIDDDDLRSFSTGQILPSQLRLAQITEMIHIASLLHDDVIDHANVRRGSPSSNVAFGNRRSILAGNFILARASTAMARLRNPQVTELLATVIADLVRGEFLQLKNTMDPSSLEIKQSNFDYYIEKSFLKTASLISKSCKASTILGQCSPTVATAAGEYGRCIGTAFQLMDDVLDYTSKDDTLGKAAGADLKLGLATAPVLFAWKKYPELGAMIVNRFNHPSDIQRARSLVECTDAIEQTITWAKEYIKKAKDSLLCLPDSPARKALFALADKVITRKK.

Isopentenyl diphosphate is bound by residues lysine 72, arginine 75, and histidine 130. Residues aspartate 137 and aspartate 141 each contribute to the Mg(2+) site. Arginine 147 contacts isopentenyl diphosphate.

Belongs to the FPP/GGPP synthase family. In terms of assembly, heterotetramer of 2 dps1 and 2 dlp1 subunits. It depends on Mg(2+) as a cofactor.

Its subcellular location is the mitochondrion. It catalyses the reaction 7 isopentenyl diphosphate + (2E,6E)-farnesyl diphosphate = all-trans-decaprenyl diphosphate + 7 diphosphate. Its pathway is cofactor biosynthesis; ubiquinone biosynthesis. Its function is as follows. Supplies decaprenyl diphosphate, the precursor for the side chain of the isoprenoid quinones ubiquinone-10. The sequence is that of Decaprenyl-diphosphate synthase subunit 1 (dps1) from Schizosaccharomyces pombe (strain 972 / ATCC 24843) (Fission yeast).